Here is an 887-residue protein sequence, read N- to C-terminus: Bifunctional uridylyltransferase/uridylyl-removing enzyme (887 aa).

The interval 1–337 (MINTSPLLNY…RLPNYERKIE (337 aa)) is uridylyltransferase. The uridylyl-removing stretch occupies residues 339 to 699 (VNDHFKIVDN…AHRKAAQDAV (361 aa)). Residues 457-579 (VDAHTLLLLR…LGDMEHLDYL (123 aa)) form the HD domain. ACT domains lie at 700–782 (QIFI…LMQR) and 809–887 (MVEI…ICQH).

This sequence belongs to the GlnD family. Requires Mg(2+) as cofactor.

The catalysed reaction is [protein-PII]-L-tyrosine + UTP = [protein-PII]-uridylyl-L-tyrosine + diphosphate. It catalyses the reaction [protein-PII]-uridylyl-L-tyrosine + H2O = [protein-PII]-L-tyrosine + UMP + H(+). Uridylyltransferase (UTase) activity is inhibited by glutamine, while glutamine activates uridylyl-removing (UR) activity. Its function is as follows. Modifies, by uridylylation and deuridylylation, the PII regulatory proteins (GlnB and homologs), in response to the nitrogen status of the cell that GlnD senses through the glutamine level. Under low glutamine levels, catalyzes the conversion of the PII proteins and UTP to PII-UMP and PPi, while under higher glutamine levels, GlnD hydrolyzes PII-UMP to PII and UMP (deuridylylation). Thus, controls uridylylation state and activity of the PII proteins, and plays an important role in the regulation of nitrogen assimilation and metabolism. The chain is Bifunctional uridylyltransferase/uridylyl-removing enzyme from Acinetobacter baumannii (strain ATCC 17978 / DSM 105126 / CIP 53.77 / LMG 1025 / NCDC KC755 / 5377).